A 306-amino-acid chain; its full sequence is Curved DNA-binding protein (306 aa).

One can recognise a J domain in the interval 5 to 69 (DYYAIMGVKP…QRRAEYDQMW (65 aa)).

It is found in the cytoplasm. Its subcellular location is the nucleoid. In terms of biological role, DNA-binding protein that preferentially recognizes a curved DNA sequence. It is probably a functional analog of DnaJ; displays overlapping activities with DnaJ, but functions under different conditions, probably acting as a molecular chaperone in an adaptive response to environmental stresses other than heat shock. Lacks autonomous chaperone activity; binds native substrates and targets them for recognition by DnaK. Its activity is inhibited by the binding of CbpM. The protein is Curved DNA-binding protein of Shigella dysenteriae serotype 1 (strain Sd197).